A 284-amino-acid chain; its full sequence is 2-dehydro-3-deoxyphosphooctonate aldolase (284 aa).

It belongs to the KdsA family.

It is found in the cytoplasm. The enzyme catalyses D-arabinose 5-phosphate + phosphoenolpyruvate + H2O = 3-deoxy-alpha-D-manno-2-octulosonate-8-phosphate + phosphate. It functions in the pathway carbohydrate biosynthesis; 3-deoxy-D-manno-octulosonate biosynthesis; 3-deoxy-D-manno-octulosonate from D-ribulose 5-phosphate: step 2/3. Its pathway is bacterial outer membrane biogenesis; lipopolysaccharide biosynthesis. The polypeptide is 2-dehydro-3-deoxyphosphooctonate aldolase (Salmonella paratyphi A (strain ATCC 9150 / SARB42)).